The primary structure comprises 230 residues: Ureidoacrylate amidohydrolase RutB (230 aa).

Aspartate 24 acts as the Proton acceptor in catalysis. Lysine 133 is an active-site residue. The active-site Nucleophile is the cysteine 166.

It belongs to the isochorismatase family. RutB subfamily.

The catalysed reaction is (Z)-3-ureidoacrylate + H2O + H(+) = (Z)-3-aminoacrylate + NH4(+) + CO2. The enzyme catalyses (Z)-3-ureidoacrylate + H2O = (Z)-3-aminoacrylate + carbamate + H(+). It catalyses the reaction (Z)-2-methylureidoacrylate + H2O + H(+) = (Z)-2-methylaminoacrylate + NH4(+) + CO2. Functionally, hydrolyzes ureidoacrylate to form aminoacrylate and carbamate. The carbamate hydrolyzes spontaneously, thereby releasing one of the nitrogen atoms of the pyrimidine ring as ammonia and one of its carbon atoms as CO2. This chain is Ureidoacrylate amidohydrolase RutB, found in Escherichia coli O7:K1 (strain IAI39 / ExPEC).